The following is a 269-amino-acid chain: 3-methyl-2-oxobutanoate hydroxymethyltransferase (269 aa).

D48 and D87 together coordinate Mg(2+). 3-methyl-2-oxobutanoate contacts are provided by residues 48-49, D87, and K116; that span reads DS. E118 provides a ligand contact to Mg(2+). Catalysis depends on E185, which acts as the Proton acceptor.

It belongs to the PanB family. Homodecamer; pentamer of dimers. Requires Mg(2+) as cofactor.

The protein resides in the cytoplasm. The catalysed reaction is 3-methyl-2-oxobutanoate + (6R)-5,10-methylene-5,6,7,8-tetrahydrofolate + H2O = 2-dehydropantoate + (6S)-5,6,7,8-tetrahydrofolate. The protein operates within cofactor biosynthesis; (R)-pantothenate biosynthesis; (R)-pantoate from 3-methyl-2-oxobutanoate: step 1/2. Catalyzes the reversible reaction in which hydroxymethyl group from 5,10-methylenetetrahydrofolate is transferred onto alpha-ketoisovalerate to form ketopantoate. The polypeptide is 3-methyl-2-oxobutanoate hydroxymethyltransferase (Campylobacter curvus (strain 525.92)).